The sequence spans 122 residues: UPF0145 protein BamMC406_5002 (122 aa).

Belongs to the UPF0145 family.

The protein is UPF0145 protein BamMC406_5002 of Burkholderia ambifaria (strain MC40-6).